The chain runs to 156 residues: Small ribosomal subunit protein uS7 (156 aa).

This sequence belongs to the universal ribosomal protein uS7 family. In terms of assembly, part of the 30S ribosomal subunit. Contacts proteins S9 and S11.

In terms of biological role, one of the primary rRNA binding proteins, it binds directly to 16S rRNA where it nucleates assembly of the head domain of the 30S subunit. Is located at the subunit interface close to the decoding center, probably blocks exit of the E-site tRNA. This is Small ribosomal subunit protein uS7 from Novosphingobium aromaticivorans (strain ATCC 700278 / DSM 12444 / CCUG 56034 / CIP 105152 / NBRC 16084 / F199).